The chain runs to 194 residues: MKLLFDFFPIILFFVVYKTTNDIVTATAALIPATAAQVAFSWFKYRKVEKMHLFALVIVVILGGATILFKDDTFIKWKPSVVCWLLAVVFLIGGWVSKKNLYQRMMEANISLPQHAWSKLNYSWVIFNTLLGALNLYVAYHYTQEQWVNFKLFGMLGLSLVFALMQGVYISRHMVEDEPAPSESATGNGDNKSF.

Transmembrane regions (helical) follow at residues 1-21 (MKLLFDFFPIILFFVVYKTTN), 49-69 (EKMHLFALVIVVILGGATILF), 77-97 (WKPSVVCWLLAVVFLIGGWVS), 120-140 (LNYSWVIFNTLLGALNLYVAY), and 150-170 (FKLFGMLGLSLVFALMQGVYI).

This sequence belongs to the YciB family.

It is found in the cell inner membrane. In terms of biological role, plays a role in cell envelope biogenesis, maintenance of cell envelope integrity and membrane homeostasis. In Hahella chejuensis (strain KCTC 2396), this protein is Inner membrane-spanning protein YciB.